The chain runs to 736 residues: Glycogen [starch] synthase, muscle (736 aa).

The residue at position 8 (Ser-8) is a Phosphoserine; by AMPK and PKA. At Ser-11 the chain carries Phosphoserine. Lys-39 is a UDP binding site. 2 residues coordinate UDP-alpha-D-glucose: His-205 and Arg-211. Alpha-D-glucose 6-phosphate is bound by residues His-291, Glu-292, Gln-294, His-297, and Lys-301. Arg-331 is a UDP binding site. UDP-alpha-D-glucose is bound at residue Arg-331. Position 412 is a phosphoserine (Ser-412). Position 501 (His-501) interacts with alpha-D-glucose 6-phosphate. Glu-510, Trp-512, and Gly-513 together coordinate UDP-alpha-D-glucose. Thr-515 contacts UDP. Arg-582 and Arg-586 together coordinate alpha-D-glucose 6-phosphate. Positions 631-736 (TQGYRYPRPA…PASSLGEERN (106 aa)) are disordered. Ser-641 is modified (phosphoserine; by DYRK2, GSK3-alpha, GSK3-beta and PASK). A phosphoserine; by GSK3-alpha and GSK3-beta mark is found at Ser-645 and Ser-649. A Phosphoserine modification is found at Ser-652. Ser-653 carries the post-translational modification Phosphoserine; by GSK3-alpha and GSK3-beta. Ser-657 carries the phosphoserine; by CK2 modification. Residues 658–681 (EDEEEPRDLPPDEDDERYDEDEEA) are compositionally biased toward acidic residues. Residues 682–695 (AKDRRNIRAPEWPR) are compositionally biased toward basic and acidic residues. Position 698 is a phosphoserine (Ser-698). A Phosphothreonine modification is found at Thr-700. A Phosphoserine modification is found at Ser-709. The span at 714-727 (PSSSVSTPSEPLSP) shows a compositional bias: low complexity. A Phosphothreonine modification is found at Thr-720. 2 positions are modified to phosphoserine: Ser-726 and Ser-730.

It belongs to the glycosyltransferase 3 family. In terms of assembly, part of the GYS1-GYG1 complex, a heterooctamer composed of a tetramer of GYS1 and 2 dimers of GYG1, where each GYS1 protomer binds to one GYG1 subunit (via GYG1 C-terminus); the GYS1 tetramer may dissociate from GYG1 dimers to continue glycogen polymerization on its own. Phosphorylation at Ser-8 by AMPK inactivates the enzyme activity. Primed phosphorylation at Ser-657 (site 5) by CSNK2A1 and CSNK2A2 is required for inhibitory phosphorylation at Ser-641 (site 3a), Ser-645 (site 3b), Ser-649 (site 3c) and Ser-653 (site 4) by GSK3A an GSK3B. Phosphorylated at Ser-641 by PASK, leading to inactivation; phosphorylation by PASK is inhibited by glycogen. Phosphorylated at Ser-641 by DYRK2, leading to inactivation. Dephosphorylation at Ser-641 and Ser-645 by PP1 activates the enzyme.

The catalysed reaction is [(1-&gt;4)-alpha-D-glucosyl](n) + UDP-alpha-D-glucose = [(1-&gt;4)-alpha-D-glucosyl](n+1) + UDP + H(+). The protein operates within glycan biosynthesis; glycogen biosynthesis. With respect to regulation, allosteric activation by glucose-6-phosphate. Phosphorylation reduces the activity towards UDP-glucose. When in the non-phosphorylated state, glycogen synthase does not require glucose-6-phosphate as an allosteric activator; when phosphorylated it does. Functionally, glycogen synthase participates in the glycogen biosynthetic process along with glycogenin and glycogen branching enzyme. Extends the primer composed of a few glucose units formed by glycogenin by adding new glucose units to it. In this context, glycogen synthase transfers the glycosyl residue from UDP-Glc to the non-reducing end of alpha-1,4-glucan. The protein is Glycogen [starch] synthase, muscle (GYS1) of Bos taurus (Bovine).